We begin with the raw amino-acid sequence, 418 residues long: Torsin-4A-B (418 aa).

The chain crosses the membrane as a helical span at residues 128 to 144; sequence CLLLFVGIVCFQIFNAI. 200–207 contributes to the ATP binding site; that stretch reads GPSGVGKS.

The protein belongs to the ClpA/ClpB family. Torsin subfamily.

It localises to the membrane. In Xenopus laevis (African clawed frog), this protein is Torsin-4A-B (tor4a-b).